The chain runs to 270 residues: Phosphonoacetaldehyde hydrolase (270 aa).

Residue Asp-11 is the Nucleophile of the active site. Mg(2+) contacts are provided by Asp-11 and Ala-13. Lys-53 serves as the catalytic Schiff-base intermediate with substrate. Asp-187 contributes to the Mg(2+) binding site.

Belongs to the HAD-like hydrolase superfamily. PhnX family. Homodimer. The cofactor is Mg(2+).

It carries out the reaction phosphonoacetaldehyde + H2O = acetaldehyde + phosphate + H(+). Its function is as follows. Involved in phosphonate degradation. The chain is Phosphonoacetaldehyde hydrolase from Salmonella choleraesuis (strain SC-B67).